Here is a 721-residue protein sequence, read N- to C-terminus: uncharacterized protein (721 aa).

Disordered stretches follow at residues Thr196–Pro291 and Ala370–Gln513. 2 stretches are compositionally biased toward low complexity: residues Ser202–Pro224 and Ser232–Pro250. Composition is skewed to pro residues over residues Pro264–Ala283 and Ala379–Pro389. Positions Ala419 to Ala429 are enriched in low complexity. Pro residues predominate over residues Val435–Thr446. The segment covering Val470–Ser484 has biased composition (polar residues). A compositionally biased stretch (low complexity) spans Ala491–Asp505.

This is an uncharacterized protein from Mycobacterium tuberculosis (strain ATCC 25618 / H37Rv).